Reading from the N-terminus, the 324-residue chain is MDVEERLKLVTRNAVEVVTEEELRQLLEEKEEPVAYVGFEPSGKVHLGHKLVIDKMIDLQEAGFHVIILLADLHAYLNEKGTLEEVRELADYNRRCFLAMGLDPNKTEFVLGSEFQLDEDYALDVYRMARHTTMRRARRSMDMIARSEENPPVSQVVYPLMQALDIVHLNVDLAVGGLEQRKIHMLARDVLPKLGYDSPTCLHTPIIHGLDGDEKMSSSKNNFIAVDDEPEVIREKLRKAYCPAREAEGNPILEIYRYFIFREYDEVTIERPEKYGGDVTYTSYEELERDFVDGELHPLDLKENAAGYLSEILKPVRKAVSAPS.

Tyrosine 36 is a binding site for L-tyrosine. The short motif at proline 41 to histidine 49 is the 'HIGH' region element. The L-tyrosine site is built by tyrosine 158, glutamine 162, aspartate 165, and glutamine 180. Positions lysine 215–serine 219 match the 'KMSKS' region motif. Serine 218 contacts ATP.

It belongs to the class-I aminoacyl-tRNA synthetase family. TyrS type 3 subfamily. As to quaternary structure, homodimer.

The protein localises to the cytoplasm. It carries out the reaction tRNA(Tyr) + L-tyrosine + ATP = L-tyrosyl-tRNA(Tyr) + AMP + diphosphate + H(+). In terms of biological role, catalyzes the attachment of tyrosine to tRNA(Tyr) in a two-step reaction: tyrosine is first activated by ATP to form Tyr-AMP and then transferred to the acceptor end of tRNA(Tyr). The chain is Tyrosine--tRNA ligase from Methanopyrus kandleri (strain AV19 / DSM 6324 / JCM 9639 / NBRC 100938).